The chain runs to 346 residues: Flap endonuclease 1 (346 aa).

Positions Met-1–Lys-102 are N-domain. Residues Asp-31, Asp-84, Glu-156, Glu-158, Asp-177, Asp-179, and Asp-239 each coordinate Mg(2+). Residues Glu-120–Gly-261 are I-domain.

It belongs to the XPG/RAD2 endonuclease family. FEN1 subfamily. In terms of assembly, interacts with PCNA. PCNA stimulates the nuclease activity without altering cleavage specificity. Mg(2+) is required as a cofactor.

In terms of biological role, structure-specific nuclease with 5'-flap endonuclease and 5'-3' exonuclease activities involved in DNA replication and repair. During DNA replication, cleaves the 5'-overhanging flap structure that is generated by displacement synthesis when DNA polymerase encounters the 5'-end of a downstream Okazaki fragment. Binds the unpaired 3'-DNA end and kinks the DNA to facilitate 5' cleavage specificity. Cleaves one nucleotide into the double-stranded DNA from the junction in flap DNA, leaving a nick for ligation. Also involved in the base excision repair (BER) pathway. Acts as a genome stabilization factor that prevents flaps from equilibrating into structures that lead to duplications and deletions. Also possesses 5'-3' exonuclease activity on nicked or gapped double-stranded DNA. This Pyrobaculum arsenaticum (strain DSM 13514 / JCM 11321 / PZ6) protein is Flap endonuclease 1.